A 318-amino-acid chain; its full sequence is Mitochondrial thiamine pyrophosphate carrier 1 (318 aa).

6 consecutive transmembrane segments (helical) span residues 12–28, 91–107, 125–141, 181–197, 221–237, and 284–301; these read GTRR…GLVS, LMYV…YRTT, SFVA…ASTY, GCSA…GLFF, AAGV…VFPL, and GLTV…VTMW. 3 Solcar repeats span residues 12-110, 120-206, and 214-309; these read GTRR…TTQA, PPPA…LRPV, and PFGS…SLHY.

This sequence belongs to the mitochondrial carrier (TC 2.A.29) family.

It is found in the mitochondrion inner membrane. Its function is as follows. Mitochondrial transporter that mediates uptake of thiamine pyrophosphate (ThPP) into mitochondria. The sequence is that of Mitochondrial thiamine pyrophosphate carrier 1 (tpc1) from Aspergillus oryzae (strain ATCC 42149 / RIB 40) (Yellow koji mold).